The primary structure comprises 541 residues: 2-succinyl-5-enolpyruvyl-6-hydroxy-3-cyclohexene-1-carboxylate synthase (541 aa).

This sequence belongs to the TPP enzyme family. MenD subfamily. Homodimer. Mg(2+) is required as a cofactor. Requires Mn(2+) as cofactor. Thiamine diphosphate serves as cofactor.

The catalysed reaction is isochorismate + 2-oxoglutarate + H(+) = 5-enolpyruvoyl-6-hydroxy-2-succinyl-cyclohex-3-ene-1-carboxylate + CO2. The protein operates within quinol/quinone metabolism; 1,4-dihydroxy-2-naphthoate biosynthesis; 1,4-dihydroxy-2-naphthoate from chorismate: step 2/7. Its pathway is quinol/quinone metabolism; menaquinone biosynthesis. In terms of biological role, catalyzes the thiamine diphosphate-dependent decarboxylation of 2-oxoglutarate and the subsequent addition of the resulting succinic semialdehyde-thiamine pyrophosphate anion to isochorismate to yield 2-succinyl-5-enolpyruvyl-6-hydroxy-3-cyclohexene-1-carboxylate (SEPHCHC). The polypeptide is 2-succinyl-5-enolpyruvyl-6-hydroxy-3-cyclohexene-1-carboxylate synthase (Leuconostoc mesenteroides subsp. mesenteroides (strain ATCC 8293 / DSM 20343 / BCRC 11652 / CCM 1803 / JCM 6124 / NCDO 523 / NBRC 100496 / NCIMB 8023 / NCTC 12954 / NRRL B-1118 / 37Y)).